The chain runs to 120 residues: Small ribosomal subunit protein uS12 (120 aa).

3-methylthioaspartic acid is present on aspartate 88.

Belongs to the universal ribosomal protein uS12 family. As to quaternary structure, part of the 30S ribosomal subunit. Contacts proteins S8 and S17. May interact with IF1 in the 30S initiation complex.

Functionally, with S4 and S5 plays an important role in translational accuracy. Its function is as follows. Interacts with and stabilizes bases of the 16S rRNA that are involved in tRNA selection in the A site and with the mRNA backbone. Located at the interface of the 30S and 50S subunits, it traverses the body of the 30S subunit contacting proteins on the other side and probably holding the rRNA structure together. The combined cluster of proteins S8, S12 and S17 appears to hold together the shoulder and platform of the 30S subunit. This Carsonella ruddii (strain PV) protein is Small ribosomal subunit protein uS12.